The following is a 77-amino-acid chain: Acyl carrier protein (77 aa).

The 76-residue stretch at 1 to 76 folds into the Carrier domain; the sequence is MSIEERVKKI…SAIDYVTKAN (76 aa). An O-(pantetheine 4'-phosphoryl)serine modification is found at S36.

Belongs to the acyl carrier protein (ACP) family. 4'-phosphopantetheine is transferred from CoA to a specific serine of apo-ACP by AcpS. This modification is essential for activity because fatty acids are bound in thioester linkage to the sulfhydryl of the prosthetic group.

It is found in the cytoplasm. Its pathway is lipid metabolism; fatty acid biosynthesis. In terms of biological role, carrier of the growing fatty acid chain in fatty acid biosynthesis. This chain is Acyl carrier protein, found in Actinobacillus pleuropneumoniae serotype 5b (strain L20).